The primary structure comprises 316 residues: Peroxidase 67 (316 aa).

An N-terminal signal peptide occupies residues 1-19 (MLKVVLLMMIMMLASQSEA). Glutamine 20 carries the pyrrolidone carboxylic acid modification. Intrachain disulfides connect cysteine 30-cysteine 110, cysteine 63-cysteine 68, cysteine 116-cysteine 312, and cysteine 196-cysteine 221. Histidine 61 serves as the catalytic Proton acceptor. The Ca(2+) site is built by aspartate 62, valine 65, glycine 67, aspartate 69, and serine 71. Proline 159 contributes to the substrate binding site. Residue histidine 189 participates in heme b binding. Threonine 190 is a binding site for Ca(2+). N-linked (GlcNAc...) asparagine glycosylation occurs at asparagine 205. Ca(2+)-binding residues include aspartate 236, serine 239, and aspartate 244.

This sequence belongs to the peroxidase family. Classical plant (class III) peroxidase subfamily. It depends on heme b as a cofactor. Ca(2+) serves as cofactor.

Its subcellular location is the secreted. It carries out the reaction 2 a phenolic donor + H2O2 = 2 a phenolic radical donor + 2 H2O. Functionally, removal of H(2)O(2), oxidation of toxic reductants, biosynthesis and degradation of lignin, suberization, auxin catabolism, response to environmental stresses such as wounding, pathogen attack and oxidative stress. These functions might be dependent on each isozyme/isoform in each plant tissue. The chain is Peroxidase 67 (PER67) from Arabidopsis thaliana (Mouse-ear cress).